The chain runs to 33 residues: Photosystem II reaction center protein Psb30 (33 aa).

A helical transmembrane segment spans residues 5–25; the sequence is VIAQLTMLTIAVITGPLVIFF.

It belongs to the Psb30/Ycf12 family. PSII is composed of 1 copy each of membrane proteins PsbA, PsbB, PsbC, PsbD, PsbE, PsbF, PsbH, PsbI, PsbJ, PsbK, PsbL, PsbM, PsbT, PsbX, PsbY, PsbZ, Psb30/Ycf12, peripheral proteins of the oxygen-evolving complex and a large number of cofactors. It forms dimeric complexes.

Its subcellular location is the plastid. The protein localises to the chloroplast thylakoid membrane. Its function is as follows. A core subunit of photosystem II (PSII), probably helps stabilize the reaction center. The chain is Photosystem II reaction center protein Psb30 from Welwitschia mirabilis (Tree tumbo).